Here is a 310-residue protein sequence, read N- to C-terminus: Putative F-box protein PP2-B2 (310 aa).

Residues 1–34 (MIQSTMGHKQSVDSRGKGRKVPGSSSMVQKHRVE) are disordered. The F-box domain occupies 44-90 (PSLFDNLPEDCISNIISFTSPRDACVAASVSKTFESAVNSDSVWDKF).

The polypeptide is Putative F-box protein PP2-B2 (PP2B2) (Arabidopsis thaliana (Mouse-ear cress)).